The sequence spans 461 residues: D-phenylhydantoinase (461 aa).

A divalent metal cation contacts are provided by His59, His61, and Lys151. Lys151 carries the N6-carboxylysine modification. Residue Tyr156 participates in substrate binding. His182 and His239 together coordinate a divalent metal cation. Ser286 serves as a coordination point for substrate. Residue Asp313 coordinates a divalent metal cation. A substrate-binding site is contributed by Asn335.

Belongs to the metallo-dependent hydrolases superfamily. Hydantoinase/dihydropyrimidinase family. As to quaternary structure, homotetramer. It depends on a divalent metal cation as a cofactor. Carboxylation allows a single lysine to coordinate two divalent metal cations.

It catalyses the reaction D-5-phenylhydantoin + H2O = N-carbamoyl-D-phenylglycine + H(+). In terms of biological role, catalyzes the stereospecific hydrolysis of the cyclic amide bond of D-hydantoin derivatives with an aromatic side chains at the 5'-position. Has no activity on dihydropyrimidines. The physiological function is unknown. The protein is D-phenylhydantoinase of Escherichia coli (strain UTI89 / UPEC).